The primary structure comprises 476 residues: NADH-quinone oxidoreductase subunit N (476 aa).

Helical transmembrane passes span 8 to 28 (ITTELALFILGLATFVLGLLV), 35 to 55 (GLGSFALLGLLLVLGITIINW), 71 to 91 (YATFFKILCLISAILVVLGSF), 102 to 122 (FEYYSTVIFTTLGMVVMASAG), 124 to 144 (FITLYLGLELMTISFVILVAF), 159 to 179 (ILLAGLSSAVLLYGLSLVYGA), 201 to 221 (LIVGVVMLVAGLGFKISAVPF), 239 to 259 (FLAVGSKAASFAVLLRLFAGG), 267 to 287 (WTLLVAVLAALSMLIGNLVAI), 295 to 315 (MLAYSSIAQAGYIMVGLVSAT), 322 to 342 (VMFYAFLYVFATIGAFTVVAI), 366 to 386 (ASVMLICLLSMAGIPPLAGFV), 405 to 425 (LGLIMSMVSVYYYLRVALVMF), and 437 to 457 (VGGAATITLVITMVATIILGI).

Belongs to the complex I subunit 2 family. In terms of assembly, NDH-1 is composed of 14 different subunits. Subunits NuoA, H, J, K, L, M, N constitute the membrane sector of the complex.

The protein localises to the cell membrane. The catalysed reaction is a quinone + NADH + 5 H(+)(in) = a quinol + NAD(+) + 4 H(+)(out). In terms of biological role, NDH-1 shuttles electrons from NADH, via FMN and iron-sulfur (Fe-S) centers, to quinones in the respiratory chain. The immediate electron acceptor for the enzyme in this species is believed to be a menaquinone. Couples the redox reaction to proton translocation (for every two electrons transferred, four hydrogen ions are translocated across the cytoplasmic membrane), and thus conserves the redox energy in a proton gradient. This Desulforamulus reducens (strain ATCC BAA-1160 / DSM 100696 / MI-1) (Desulfotomaculum reducens) protein is NADH-quinone oxidoreductase subunit N.